The following is a 201-amino-acid chain: Putative 3-methyladenine DNA glycosylase (201 aa).

Belongs to the DNA glycosylase MPG family.

The polypeptide is Putative 3-methyladenine DNA glycosylase (Rhodopseudomonas palustris (strain HaA2)).